The chain runs to 276 residues: NADPH-dependent 7-cyano-7-deazaguanine reductase (276 aa).

Residue 80–82 (VES) coordinates substrate. Residue 82-83 (SK) participates in NADPH binding. Cys-183 acts as the Thioimide intermediate in catalysis. Residue Asp-190 is the Proton donor of the active site. Residue 222–223 (HE) participates in substrate binding. Position 251–252 (251–252 (RG)) interacts with NADPH.

It belongs to the GTP cyclohydrolase I family. QueF type 2 subfamily. In terms of assembly, homodimer.

The protein localises to the cytoplasm. The enzyme catalyses 7-aminomethyl-7-carbaguanine + 2 NADP(+) = 7-cyano-7-deazaguanine + 2 NADPH + 3 H(+). It participates in tRNA modification; tRNA-queuosine biosynthesis. Functionally, catalyzes the NADPH-dependent reduction of 7-cyano-7-deazaguanine (preQ0) to 7-aminomethyl-7-deazaguanine (preQ1). The chain is NADPH-dependent 7-cyano-7-deazaguanine reductase from Burkholderia orbicola (strain MC0-3).